A 233-amino-acid chain; its full sequence is Bcl-2-like protein 1 (233 aa).

The BH4 motif lies at 4–24 (SNRELVVDFLSYKLSQKGYSW). Positions 28–71 (SDVEENRTEAPEGTESEMETPSAINGNPSWHLADSPAVNGATGH) are disordered. Ser49 is modified (phosphoserine; by PLK3). Ser62 carries the post-translational modification Phosphoserine; by CDK1. A BH3 motif is present at residues 86-100 (VKQALREAGDEFELR). The short motif at 129–148 (ELFRDGVNWGRIVAFFSFGG) is the BH1 element. The BH2 signature appears at 180 to 195 (PWIQENGGWDTFVELY). Residues 210–226 (FNRWFLTGMTVAGVVLL) traverse the membrane as a helical segment.

Belongs to the Bcl-2 family. In terms of assembly, homodimer. Interacts with BCL2L11. Interacts with BAD. Interacts with PGAM5. Interacts with HEBP2. Interacts with p53/TP53 and BBC3; interaction with BBC3 disrupts the interaction with p53/TP53. Interacts with ATP5F1A and ATP5F1B; the interactions mediate the association of isoform Bcl-X(L) with the mitochondrial membrane ATP synthase F(1)F(0) ATP synthase. Interacts with VDAC1. Interacts with BCL2L11 (via BH3). Interacts with RNF183. Interacts with GIMAP3/IAN4 and GIMAP5/IAN5. Interacts with GIMAP5 and HSPA8/HSC70; the interaction between HSPA8 and BCL2L1 is impaired in the absence of GIMAP5. Interacts with isoform 4 of CLU; this interaction releases and activates BAX and promotes cell death. As to quaternary structure, forms heterodimers with BAX, BAK or BCL2; heterodimerization with BAX does not seem to be required for anti-apoptotic activity. Interacts with isoform 1 of SIVA1; the interaction inhibits the anti-apoptotic activity. Interacts with IKZF3. Interacts with RTL10/BOP. Interacts with DNM1L and CLTA; DNM1L and BCL2L1 isoform BCL-X(L) may form a complex in synaptic vesicles that also contains clathrin and MFF. Interacts (via the loop between motifs BH4 and BH3) with NLRP1 (via LRR repeats), but not with NLRP2, NLRP3, NLRP4, PYCARD, nor MEFV. Interacts with BECN1. In terms of processing, proteolytically cleaved by caspases during apoptosis. The cleaved protein, lacking the BH4 motif, has pro-apoptotic activity. Post-translationally, phosphorylated on Ser-62 by CDK1. This phosphorylation is partial in normal mitotic cells, but complete in G2-arrested cells upon DNA-damage, thus promoting subsequent apoptosis probably by triggering caspases-mediated proteolysis. Phosphorylated by PLK3, leading to regulate the G2 checkpoint and progression to cytokinesis during mitosis. Phosphorylation at Ser-49 appears during the S phase and G2, disappears rapidly in early mitosis during prometaphase, metaphase and early anaphase, and re-appears during telophase and cytokinesis. Ubiquitinated by RNF183 during prolonged ER stress, leading to degradation by the proteosome. As to expression, bcl-X(S) is expressed at high levels in cells that undergo a high rate of turnover, such as developing lymphocytes. In contrast, Bcl-X(L) is found in tissues containing long-lived postmitotic cells, such as adult brain.

It is found in the mitochondrion inner membrane. The protein resides in the mitochondrion outer membrane. The protein localises to the mitochondrion matrix. It localises to the cytoplasmic vesicle. Its subcellular location is the secretory vesicle. It is found in the synaptic vesicle membrane. The protein resides in the cytoplasm. The protein localises to the cytosol. It localises to the cytoskeleton. Its subcellular location is the microtubule organizing center. It is found in the centrosome. The protein resides in the nucleus membrane. In terms of biological role, potent inhibitor of cell death. Inhibits activation of caspases. Appears to regulate cell death by blocking the voltage-dependent anion channel (VDAC) by binding to it and preventing the release of the caspase activator, CYC1, from the mitochondrial membrane. Also acts as a regulator of G2 checkpoint and progression to cytokinesis during mitosis. Its function is as follows. Isoform Bcl-X(L) also regulates presynaptic plasticity, including neurotransmitter release and recovery, number of axonal mitochondria as well as size and number of synaptic vesicle clusters. During synaptic stimulation, increases ATP availability from mitochondria through regulation of mitochondrial membrane ATP synthase F(1)F(0) activity and regulates endocytic vesicle retrieval in hippocampal neurons through association with DMN1L and stimulation of its GTPase activity in synaptic vesicles. May attenuate inflammation impairing NLRP1-inflammasome activation, hence CASP1 activation and IL1B release. Isoform Bcl-X(S) promotes apoptosis. This is Bcl-2-like protein 1 (BCL2L1) from Homo sapiens (Human).